The primary structure comprises 1700 residues: A-kinase anchor protein SPHKAP (1700 aa).

Disordered stretches follow at residues Ser364–Glu385, Ile742–His778, and Ser793–Glu885. The segment covering Ser768–His778 has biased composition (low complexity). The span at Asp822–Lys831 shows a compositional bias: polar residues. A compositionally biased stretch (basic and acidic residues) spans Ala839–Ala855. A compositionally biased stretch (polar residues) spans Ser857–Gln873. Residues Phe929–Ala946 form a PKA-RII subunit binding domain region. The segment at Lys980–Lys1006 is disordered. Ser1025, Ser1085, Ser1107, Ser1120, Ser1121, Ser1124, Ser1259, and Ser1288 each carry phosphoserine. 3 disordered regions span residues Asp1374–Ile1414, Ile1481–Ser1535, and Gly1585–Pro1604. Residues Pro1383–Pro1398 show a composition bias toward polar residues. The span at Gln1586 to Pro1604 shows a compositional bias: polar residues.

This sequence belongs to the AKAP110 family. As to quaternary structure, interacts (via the PKA-RII subunit binding domain) with the RI subunit of PKA. Interacts with SPHK1; the interaction greatly reduces SPHK1 activity. In terms of tissue distribution, highly expressed in heart. Both isoforms abundantly expressed in ventricle. Also expressed in spleen, ovary and brain.

The protein localises to the cytoplasm. Anchoring protein that binds preferentially to the type I regulatory subunit of c-AMP-dependent protein kinase (PKA type I) and targets it to distinct subcellular compartments. May act as a converging factor linking cAMP and sphingosine signaling pathways. Plays a regulatory role in the modulation of SPHK1. The sequence is that of A-kinase anchor protein SPHKAP (SPHKAP) from Homo sapiens (Human).